The primary structure comprises 93 residues: Large ribosomal subunit protein uL23cz/uL23cy (93 aa).

This sequence belongs to the universal ribosomal protein uL23 family. Part of the 50S ribosomal subunit.

Its subcellular location is the plastid. It localises to the chloroplast. Binds to 23S rRNA. The chain is Large ribosomal subunit protein uL23cz/uL23cy (rpl23-A) from Drimys granadensis.